The following is a 514-amino-acid chain: Putative ankyrin repeat protein R863 (514 aa).

ANK repeat units follow at residues 45–74 (AKID…LKHP), 84–114 (KSLN…DINS), 115–144 (KKNR…DVRA), 146–174 (KDYA…NIKV), 176–204 (DNFA…NIRA), 205–234 (DNNY…DIRA), 236–264 (NNYA…NVKS), 266–294 (NDCA…DVRS), 295–324 (ENDY…NVRA), 325–354 (DNNY…NIRS), 356–384 (NDYA…NFKS), 385–414 (DYDC…DIRV), 415–444 (NNDY…DIRA), 446–474 (NDYA…NVKA), and 476–504 (NNYA…DVRS).

This is Putative ankyrin repeat protein R863 from Acanthamoeba polyphaga mimivirus (APMV).